Reading from the N-terminus, the 1153-residue chain is Myosin-3 (1153 aa).

One can recognise a Myosin N-terminal SH3-like domain in the interval 104–153; the sequence is KKVLQFWVQLPNGNWELGKIMSTSGEESVIVVTEGKVLKVKSETLVPANP. The Myosin motor domain occupies 157–829; that stretch reads DGVDDLMQLS…QIGVLEDTRN (673 aa). ATP-binding positions include 248–255 and 296–304; these read GESGAGKT and NDNSSRFGK. 2 actin-binding regions span residues 581–615 and 709–731; these read LFEK…KQHL and LFQL…KPNN. 3 IQ domains span residues 831 to 860, 854 to 883, and 903 to 932; these read TLHG…GITI, LKTG…RHRA, and TVDA…LSSG. A coiled-coil region spans residues 948-996; the sequence is YLSDLQRRVLRTEAALREKEEENDILRQRVQQYDNRWSEYETKMKSMEE. Residues 1020–1050 form a disordered region; it reads DSARNSDASVNASDATDLDSGGSHYQMGHGR. A compositionally biased stretch (polar residues) spans 1024 to 1033; sequence NSDASVNASD.

Belongs to the TRAFAC class myosin-kinesin ATPase superfamily. Myosin family. Plant myosin class VIII subfamily. As to quaternary structure, homodimer.

Its function is as follows. Myosin heavy chain that is required for the cell cycle-regulated transport of various organelles and proteins for their segregation. Functions by binding with its tail domain to receptor proteins on organelles and exerting force with its N-terminal motor domain against actin filaments, thereby transporting its cargo along polarized actin cables. In Arabidopsis thaliana (Mouse-ear cress), this protein is Myosin-3 (VIII-A).